A 390-amino-acid chain; its full sequence is Succinate--CoA ligase [ADP-forming] subunit beta (390 aa).

In terms of domain architecture, ATP-grasp spans 9–245 (KELLSRYGLP…KSQENEREVK (237 aa)). ATP-binding positions include lysine 46, 53–55 (GRG), glutamate 100, tyrosine 103, and glutamate 108. Asparagine 200 and aspartate 214 together coordinate Mg(2+). Substrate contacts are provided by residues asparagine 265 and 322–324 (GIV).

It belongs to the succinate/malate CoA ligase beta subunit family. Heterotetramer of two alpha and two beta subunits. The cofactor is Mg(2+).

It carries out the reaction succinate + ATP + CoA = succinyl-CoA + ADP + phosphate. The enzyme catalyses GTP + succinate + CoA = succinyl-CoA + GDP + phosphate. It participates in carbohydrate metabolism; tricarboxylic acid cycle; succinate from succinyl-CoA (ligase route): step 1/1. In terms of biological role, succinyl-CoA synthetase functions in the citric acid cycle (TCA), coupling the hydrolysis of succinyl-CoA to the synthesis of either ATP or GTP and thus represents the only step of substrate-level phosphorylation in the TCA. The beta subunit provides nucleotide specificity of the enzyme and binds the substrate succinate, while the binding sites for coenzyme A and phosphate are found in the alpha subunit. The polypeptide is Succinate--CoA ligase [ADP-forming] subunit beta (Chromobacterium violaceum (strain ATCC 12472 / DSM 30191 / JCM 1249 / CCUG 213 / NBRC 12614 / NCIMB 9131 / NCTC 9757 / MK)).